A 979-amino-acid polypeptide reads, in one-letter code: Protocadherin alpha-9 (979 aa).

The first 59 residues, Met-1–Gly-59, serve as a signal peptide directing secretion. The Extracellular segment spans residues Gln-60–Asn-726. 6 Cadherin domains span residues Ser-64–Phe-163, Ser-164–Phe-272, Asp-273–Ile-380, Val-381–Phe-485, Ala-486–Leu-595, and Val-611–Ala-707. N-linked (GlcNAc...) asparagine glycans are attached at residues Asn-287 and Asn-295. N-linked (GlcNAc...) asparagine glycosylation occurs at Asn-578. A helical transmembrane segment spans residues Val-727–Tyr-747. The Cytoplasmic segment spans residues Thr-748–Gln-979. PXXP repeat units follow at residues Leu-763–Pro-766, Pro-828–Pro-831, Pro-861–Pro-864, Pro-902–Pro-905, and Pro-920–Pro-923. The tract at residues Leu-763 to Pro-923 is 5 X 4 AA repeats of P-X-X-P. The segment at Ala-859–Gln-979 is disordered. Over residues Asp-938 to Lys-952 the composition is skewed to basic and acidic residues.

It is found in the cell membrane. Potential calcium-dependent cell-adhesion protein. May be involved in the establishment and maintenance of specific neuronal connections in the brain. This is Protocadherin alpha-9 from Mus musculus (Mouse).